The following is a 489-amino-acid chain: Cytochrome P450 monooxygenase bfoB (489 aa).

The N-terminal stretch at 1-18 (MLALYLIAGLLVGLLVYR) is a signal peptide. N-linked (GlcNAc...) asparagine glycosylation is found at N113, N348, and N386. Position 429 (C429) interacts with heme.

This sequence belongs to the cytochrome P450 family. Requires heme as cofactor.

It catalyses the reaction 2 fonsecin B + NADPH + O2 + H(+) = bifonsecin B + NADP(+) + 2 H2O. The enzyme catalyses 2 rubrofusarin B + NADPH + O2 + 3 H(+) = nigerone + NADP(+) + 2 H2O. The protein operates within secondary metabolite biosynthesis. Its function is as follows. Cytochrome P450 monooxygenase; part of the gene cluster that mediates the biosynthesis of bifonsecin B, a dimeric gamma-naphthopyrone. The first step in the biosynthesis of bifonsecin B is the production of gamma-naphthopyrone precursor YWA1 by the non-reducing polyketide synthase albA, via condensation of one acetyl-CoA starter unit with 6 malonyl-CoA units. YWA1 is then methylated by bfoE at position C-6 to yield foncesin which is further methylated at position C-8 by bfoD to produce fonsecin B. A key enzyme in the biosynthetic pathway is the cytochrome P450 monooxygenase bfoB which catalyzes the oxidative dimerization of fonsecin B to bifonsecin B. Bfob also catalyzes the oxidative dimerization of rubrofusarin B into nigerone. The stereoselectivity of bfoB is influenced by the two natural monomeric substrates; homodimerization of fonsecin B yields a stereochemically pure biaryl, M-foncerine B, while rubrofusarin B yields a mixture of enantiomers M- and P-nigerone. This is Cytochrome P450 monooxygenase bfoB from Aspergillus brasiliensis (strain CBS 101740 / IMI 381727 / IBT 21946).